The sequence spans 459 residues: tRNA modification GTPase MnmE (459 aa).

(6S)-5-formyl-5,6,7,8-tetrahydrofolate is bound by residues R25, E87, and R126. A TrmE-type G domain is found at 221-380 (GLKVAIVGRP…LETAILEIVQ (160 aa)). A K(+)-binding site is contributed by N231. GTP contacts are provided by residues 231 to 236 (NVGKSS), 250 to 256 (TDLPGTT), and 275 to 278 (DTAG). A Mg(2+)-binding site is contributed by S235. K(+) contacts are provided by T250, L252, and T255. Mg(2+) is bound at residue T256. Position 459 (K459) interacts with (6S)-5-formyl-5,6,7,8-tetrahydrofolate.

Belongs to the TRAFAC class TrmE-Era-EngA-EngB-Septin-like GTPase superfamily. TrmE GTPase family. As to quaternary structure, homodimer. Heterotetramer of two MnmE and two MnmG subunits. Requires K(+) as cofactor.

It is found in the cytoplasm. In terms of biological role, exhibits a very high intrinsic GTPase hydrolysis rate. Involved in the addition of a carboxymethylaminomethyl (cmnm) group at the wobble position (U34) of certain tRNAs, forming tRNA-cmnm(5)s(2)U34. The chain is tRNA modification GTPase MnmE from Nostoc sp. (strain PCC 7120 / SAG 25.82 / UTEX 2576).